The following is a 302-amino-acid chain: Acetaldehyde dehydrogenase (302 aa).

An NAD(+)-binding site is contributed by 12-15 (SGNI). Catalysis depends on C127, which acts as the Acyl-thioester intermediate. Residues 158 to 166 (SAGPGTRQN) and N276 contribute to the NAD(+) site.

Belongs to the acetaldehyde dehydrogenase family.

The enzyme catalyses acetaldehyde + NAD(+) + CoA = acetyl-CoA + NADH + H(+). The polypeptide is Acetaldehyde dehydrogenase (nahO) (Geobacillus genomosp. 3).